A 179-amino-acid polypeptide reads, in one-letter code: Prion-like protein doppel (179 aa).

A signal peptide spans 1-25 (MKNRLGTWWVAILCMLLASHLSTVK). Positions 27-50 (RGIKHRFKWNRKVLPSSGGQITEA) are flexible tail. The tract at residues 51–155 (RVAENRPGAF…KHCDFWLERG (105 aa)) is globular. 2 cysteine pairs are disulfide-bonded: cysteine 95–cysteine 148 and cysteine 109–cysteine 143. 2 N-linked (GlcNAc...) asparagine glycosylation sites follow: asparagine 99 and asparagine 111. The interval 125–142 (KQDSKLHQRVLWRLIKEI) is cu(2+) binding. Glycine 155 carries GPI-anchor amidated glycine lipidation. A propeptide spans 156 to 179 (AALRVAVDQPAMVCLLGFVWFIVK) (removed in mature form).

The protein belongs to the prion family. N-glycosylated. N-glycosylated at two distinct sites. Post-translationally, O-glycosylated. Detected in testis. Detected within seminiferous tubules, on round and elongated spermatids (at protein level). Not detected in brain (at protein level). Detected in testis, and at low levels in heart. Expression in brain is very low and barely detectable.

The protein localises to the cell membrane. Functionally, required for normal acrosome reaction and for normal male fertility. Can bind Cu(2+). This is Prion-like protein doppel (Prnd) from Mus musculus (Mouse).